Here is a 370-residue protein sequence, read N- to C-terminus: Aldo-keto reductase NECHADRAFT_45914 (370 aa).

Residue D78 coordinates NADP(+). The active-site Proton donor is the Y83. A substrate-binding site is contributed by H174. NADP(+)-binding positions include 204-205, Q230, 259-269, and 333-341; these read SS, APLASGRLARR, and STVQRIEEA.

It belongs to the aldo/keto reductase family.

It participates in secondary metabolite biosynthesis. Aldo-keto reductase; part of the gene cluster that mediates the biosynthesis of sansalvamide, a cyclic pentadepsipeptide that shows promising results as potential anti-cancer drug. The nonribosmal peptide synthetase NRPS30 produces sansalvamide by incorporating successively one phenylalanine, one leucine, one alpha-hydroxyisocaproic acid (HICA), one valine and one leucine before sansalvamide is released from by cyclization by the terminal C domain of NRPS30. The HICA residue is probably provided by reduction of alpha-ketoisocaproate by the cluster-specific aldo-keto reductase (NECHADRAFT_45914). The sequence is that of Aldo-keto reductase NECHADRAFT_45914 from Fusarium vanettenii (strain ATCC MYA-4622 / CBS 123669 / FGSC 9596 / NRRL 45880 / 77-13-4) (Fusarium solani subsp. pisi).